A 101-amino-acid polypeptide reads, in one-letter code: Large ribosomal subunit protein uL24 (101 aa).

It belongs to the universal ribosomal protein uL24 family. In terms of assembly, part of the 50S ribosomal subunit.

In terms of biological role, one of two assembly initiator proteins, it binds directly to the 5'-end of the 23S rRNA, where it nucleates assembly of the 50S subunit. One of the proteins that surrounds the polypeptide exit tunnel on the outside of the subunit. This chain is Large ribosomal subunit protein uL24, found in Streptococcus uberis (strain ATCC BAA-854 / 0140J).